The following is a 339-amino-acid chain: Enhancer of mRNA-decapping protein 1 (339 aa).

Disordered stretches follow at residues 1–240 (MMMH…PPRY) and 309–339 (FPVN…SAKK). The segment covering 13-25 (SPGSENHSNPASR) has biased composition (polar residues). Composition is skewed to basic and acidic residues over residues 26–38 (EQSK…ERRL) and 91–100 (DNKEKNKKLL). Residues 111 to 131 (NFSFYSESNSNSNSNVSSNSN) are compositionally biased toward low complexity. A compositionally biased stretch (basic and acidic residues) spans 163–173 (RPDKNGKKGPV). The span at 196-212 (FQRTSPKQQANTINDEN) shows a compositional bias: polar residues. Residues 213–237 (SSPSSSASSVSMSSPRPVAGAVAAP) are compositionally biased toward low complexity.

The protein belongs to the EDC family.

The protein localises to the cytoplasm. In terms of biological role, mRNA-binding protein which stimulates mRNA decapping. This chain is Enhancer of mRNA-decapping protein 1 (EDC1), found in Scheffersomyces stipitis (strain ATCC 58785 / CBS 6054 / NBRC 10063 / NRRL Y-11545) (Yeast).